Reading from the N-terminus, the 340-residue chain is Phosphate acyltransferase (340 aa).

The segment at 285–340 (WRQSGRPARHRGQEPRRHRQPRFWLCHRRGRRRSPRQRNRTHPGTGQPPAGCAGAR) is disordered. The segment covering 300-325 (RRHRQPRFWLCHRRGRRRSPRQRNRT) has biased composition (basic residues).

The protein belongs to the PlsX family. As to quaternary structure, homodimer. Probably interacts with PlsY.

The protein localises to the cytoplasm. It carries out the reaction a fatty acyl-[ACP] + phosphate = an acyl phosphate + holo-[ACP]. It participates in lipid metabolism; phospholipid metabolism. In terms of biological role, catalyzes the reversible formation of acyl-phosphate (acyl-PO(4)) from acyl-[acyl-carrier-protein] (acyl-ACP). This enzyme utilizes acyl-ACP as fatty acyl donor, but not acyl-CoA. The sequence is that of Phosphate acyltransferase from Laribacter hongkongensis (strain HLHK9).